Reading from the N-terminus, the 270-residue chain is UPF0246 protein PsycPRwf_0637 (270 aa).

Belongs to the UPF0246 family.

The chain is UPF0246 protein PsycPRwf_0637 from Psychrobacter sp. (strain PRwf-1).